The sequence spans 119 residues: Large ribosomal subunit protein bL20 (119 aa).

This sequence belongs to the bacterial ribosomal protein bL20 family.

In terms of biological role, binds directly to 23S ribosomal RNA and is necessary for the in vitro assembly process of the 50S ribosomal subunit. It is not involved in the protein synthesizing functions of that subunit. The chain is Large ribosomal subunit protein bL20 from Xanthomonas oryzae pv. oryzae (strain KACC10331 / KXO85).